The primary structure comprises 414 residues: Collagenase (414 aa).

This sequence belongs to the peptidase U32 family. Homodimer. Requires a metal cation as cofactor.

Has collagenase activity. Hydrolyzes type I collagen. May play a role in virulence. The chain is Collagenase (prtC) from Porphyromonas gingivalis (strain ATCC BAA-308 / W83).